Here is a 253-residue protein sequence, read N- to C-terminus: Sulfate transporter CysZ (253 aa).

Helical transmembrane passes span 31 to 51 (FVIL…WWLF), 72 to 92 (LSYI…GYFF), 151 to 171 (IVLL…PVLW), and 222 to 242 (IPVL…AMWV).

The protein belongs to the CysZ family.

The protein resides in the cell inner membrane. Its function is as follows. High affinity, high specificity proton-dependent sulfate transporter, which mediates sulfate uptake. Provides the sulfur source for the cysteine synthesis pathway. This Escherichia fergusonii (strain ATCC 35469 / DSM 13698 / CCUG 18766 / IAM 14443 / JCM 21226 / LMG 7866 / NBRC 102419 / NCTC 12128 / CDC 0568-73) protein is Sulfate transporter CysZ.